Reading from the N-terminus, the 358-residue chain is Heme A synthase (358 aa).

8 consecutive transmembrane segments (helical) span residues 22–42 (IQVW…VGGA), 107–127 (VLGR…WAIK), 133–153 (VLLQ…VGWW), 172–192 (LAFH…LSQG), 208–228 (FAGW…LVAG), 269–289 (FVHR…AFYV), 302–322 (AFFI…TLLQ), and 324–344 (VPIS…CFSV). Heme is bound at residue histidine 271. Histidine 332 is a heme binding site.

It belongs to the COX15/CtaA family. Type 2 subfamily. As to quaternary structure, interacts with CtaB. Requires heme b as cofactor.

The protein localises to the cell membrane. It catalyses the reaction Fe(II)-heme o + 2 A + H2O = Fe(II)-heme a + 2 AH2. It functions in the pathway porphyrin-containing compound metabolism; heme A biosynthesis; heme A from heme O: step 1/1. Functionally, catalyzes the conversion of heme O to heme A by two successive hydroxylations of the methyl group at C8. The first hydroxylation forms heme I, the second hydroxylation results in an unstable dihydroxymethyl group, which spontaneously dehydrates, resulting in the formyl group of heme A. In Bartonella henselae (strain ATCC 49882 / DSM 28221 / CCUG 30454 / Houston 1) (Rochalimaea henselae), this protein is Heme A synthase.